A 1407-amino-acid chain; its full sequence is DNA-directed RNA polymerase subunit beta' (1407 aa).

4 residues coordinate Zn(2+): C70, C72, C85, and C88. The Mg(2+) site is built by D460, D462, and D464. Zn(2+) is bound by residues C814, C888, C895, and C898. K972 is modified (N6-acetyllysine).

The protein belongs to the RNA polymerase beta' chain family. As to quaternary structure, the RNAP catalytic core consists of 2 alpha, 1 beta, 1 beta' and 1 omega subunit. When a sigma factor is associated with the core the holoenzyme is formed, which can initiate transcription. It depends on Mg(2+) as a cofactor. The cofactor is Zn(2+).

It catalyses the reaction RNA(n) + a ribonucleoside 5'-triphosphate = RNA(n+1) + diphosphate. DNA-dependent RNA polymerase catalyzes the transcription of DNA into RNA using the four ribonucleoside triphosphates as substrates. This is DNA-directed RNA polymerase subunit beta' from Shigella boydii serotype 18 (strain CDC 3083-94 / BS512).